The primary structure comprises 64 residues: Large ribosomal subunit protein bL32 (64 aa).

The segment at 1–36 (MAVQKSRVTPSRRGQRRSHDALSAKQLSTDPTTGEV) is disordered.

It belongs to the bacterial ribosomal protein bL32 family.

The polypeptide is Large ribosomal subunit protein bL32 (Stenotrophomonas maltophilia (strain K279a)).